Reading from the N-terminus, the 530-residue chain is Ubiquitin carboxyl-terminal hydrolase 17-like protein 17 (530 aa).

The USP domain maps to 80-375 (AGLQNMGNTC…QAYVLFYIQK (296 aa)). Residue Cys-89 is the Nucleophile of the active site. His-334 functions as the Proton acceptor in the catalytic mechanism. Composition is skewed to basic and acidic residues over residues 382 to 392 (SESVSRGREPR) and 398 to 411 (DTDR…LKRD). 2 disordered regions span residues 382–411 (SESV…LKRD) and 477–530 (NHHP…LVCQ). Over residues 493-505 (TPTHQESMNTGTL) the composition is skewed to polar residues. Residues 510–524 (GRARRSKGKNKHSKR) are compositionally biased toward basic residues.

Belongs to the peptidase C19 family. USP17 subfamily.

It is found in the nucleus. Its subcellular location is the endoplasmic reticulum. The enzyme catalyses Thiol-dependent hydrolysis of ester, thioester, amide, peptide and isopeptide bonds formed by the C-terminal Gly of ubiquitin (a 76-residue protein attached to proteins as an intracellular targeting signal).. Its function is as follows. Deubiquitinating enzyme that removes conjugated ubiquitin from specific proteins to regulate different cellular processes that may include cell proliferation, progression through the cell cycle, apoptosis, cell migration, and the cellular response to viral infection. The polypeptide is Ubiquitin carboxyl-terminal hydrolase 17-like protein 17 (USP17L17) (Homo sapiens (Human)).